A 111-amino-acid chain; its full sequence is Universal stress protein B (111 aa).

The next 2 membrane-spanning stretches (helical) occupy residues Met-1–Arg-21 and Phe-90–Trp-110.

It belongs to the universal stress protein B family.

It localises to the cell inner membrane. This Enterobacter sp. (strain 638) protein is Universal stress protein B.